Reading from the N-terminus, the 205-residue chain is Large ribosomal subunit protein bL21m (205 aa).

The transit peptide at 1–39 (MAASSLTVTLGRLASACSHSILRPSGPGAASLWSASRRF) directs the protein to the mitochondrion.

Belongs to the bacterial ribosomal protein bL21 family. As to quaternary structure, component of the mitochondrial large ribosomal subunit (mt-LSU). Mature mammalian 55S mitochondrial ribosomes consist of a small (28S) and a large (39S) subunit. The 28S small subunit contains a 12S ribosomal RNA (12S mt-rRNA) and 30 different proteins. The 39S large subunit contains a 16S rRNA (16S mt-rRNA), a copy of mitochondrial valine transfer RNA (mt-tRNA(Val)), which plays an integral structural role, and 52 different proteins.

The protein resides in the mitochondrion. This is Large ribosomal subunit protein bL21m (MRPL21) from Homo sapiens (Human).